Reading from the N-terminus, the 282-residue chain is Undecaprenyl-diphosphatase 1 (282 aa).

8 helical membrane passes run 1-21 (MLLL…VLPL), 46-66 (GVAL…LYFW), 91-111 (AFLV…LAHF), 117-137 (SPGL…LGVI), 150-170 (MGGI…LPGV), 193-213 (FSML…GLDL), 226-246 (LIAA…MMAW), and 260-280 (VLLG…APFL).

This sequence belongs to the UppP family.

The protein localises to the cell inner membrane. It carries out the reaction di-trans,octa-cis-undecaprenyl diphosphate + H2O = di-trans,octa-cis-undecaprenyl phosphate + phosphate + H(+). Its function is as follows. Catalyzes the dephosphorylation of undecaprenyl diphosphate (UPP). Confers resistance to bacitracin. The sequence is that of Undecaprenyl-diphosphatase 1 from Rhodospirillum rubrum (strain ATCC 11170 / ATH 1.1.1 / DSM 467 / LMG 4362 / NCIMB 8255 / S1).